The chain runs to 228 residues: ATP phosphoribosyltransferase (228 aa).

It belongs to the ATP phosphoribosyltransferase family. Short subfamily. In terms of assembly, heteromultimer composed of HisG and HisZ subunits.

The protein resides in the cytoplasm. The enzyme catalyses 1-(5-phospho-beta-D-ribosyl)-ATP + diphosphate = 5-phospho-alpha-D-ribose 1-diphosphate + ATP. Its pathway is amino-acid biosynthesis; L-histidine biosynthesis; L-histidine from 5-phospho-alpha-D-ribose 1-diphosphate: step 1/9. In terms of biological role, catalyzes the condensation of ATP and 5-phosphoribose 1-diphosphate to form N'-(5'-phosphoribosyl)-ATP (PR-ATP). Has a crucial role in the pathway because the rate of histidine biosynthesis seems to be controlled primarily by regulation of HisG enzymatic activity. The chain is ATP phosphoribosyltransferase from Moorella thermoacetica (strain ATCC 39073 / JCM 9320).